A 599-amino-acid polypeptide reads, in one-letter code: Elongation factor 4 (599 aa).

A tr-type G domain is found at 4–186; sequence SKIRNFSIIA…SIVEKVPAPK (183 aa). Residues 16–21 and 133–136 each bind GTP; these read DHGKST and NKVD.

The protein belongs to the TRAFAC class translation factor GTPase superfamily. Classic translation factor GTPase family. LepA subfamily.

The protein localises to the cell inner membrane. The enzyme catalyses GTP + H2O = GDP + phosphate + H(+). In terms of biological role, required for accurate and efficient protein synthesis under certain stress conditions. May act as a fidelity factor of the translation reaction, by catalyzing a one-codon backward translocation of tRNAs on improperly translocated ribosomes. Back-translocation proceeds from a post-translocation (POST) complex to a pre-translocation (PRE) complex, thus giving elongation factor G a second chance to translocate the tRNAs correctly. Binds to ribosomes in a GTP-dependent manner. This chain is Elongation factor 4, found in Syntrophotalea carbinolica (strain DSM 2380 / NBRC 103641 / GraBd1) (Pelobacter carbinolicus).